A 453-amino-acid chain; its full sequence is UDP-glycosyltransferase 76E9 (453 aa).

Residues Ser279, 337–339 (APQ), 354–362 (HCGWNSTLE), and 376–379 (TTDQ) contribute to the UDP-alpha-D-glucose site.

The protein belongs to the UDP-glycosyltransferase family.

The chain is UDP-glycosyltransferase 76E9 (UGT76E9) from Arabidopsis thaliana (Mouse-ear cress).